The primary structure comprises 230 residues: MATINLSLLPKTLTPNSKTLAPLLSILSTSSLSFLPCTRPHPIKSRSAAYPTVRALTDGEYSSRRNNNNNNSGEERETIMLPGCDYNHWLIVMEFPKDPAPTREQMIDTYLNTLATVLGSMEEAKKNMYAFSTTTYTGFQCTVTEETSEKFKGLPGVLWVLPDSYIDVKNKDYGGDKYVNGEIIPCQYPTYQPKQSRSSKYKSKAYVRQRDGPPAEQRRPKQEATPESST.

The N-terminal 55 residues, 1-55 (MATINLSLLPKTLTPNSKTLAPLLSILSTSSLSFLPCTRPHPIKSRSAAYPTVRA), are a transit peptide targeting the chloroplast. Positions 189-230 (PTYQPKQSRSSKYKSKAYVRQRDGPPAEQRRPKQEATPESST) are disordered. The segment covering 197–207 (RSSKYKSKAYV) has biased composition (basic residues). Residues 208–224 (RQRDGPPAEQRRPKQEA) are compositionally biased toward basic and acidic residues.

As to expression, expressed in leaves, flowers including petals, and to a low level in roots.

The protein resides in the plastid. Its subcellular location is the chloroplast. Acts very early in chloroplast development, being required for expression of RNA polymerase beta subunit gene, and hence indirectly for subsequent expression of CAB and RBCS genes. The polypeptide is DAG protein, chloroplastic (DAG) (Antirrhinum majus (Garden snapdragon)).